Reading from the N-terminus, the 218-residue chain is Vacuolar protein-sorting-associated protein 37 homolog 2 (218 aa).

The tract at residues 1-51 is disordered; the sequence is MFNFWGSKEQQQGQSRPSPEASATPWYSPSLVTSPSSSRPQTSGQIPSHVS. The segment covering 8-17 has biased composition (polar residues); it reads KEQQQGQSRP. The span at 28–40 shows a compositional bias: low complexity; it reads SPSLVTSPSSSRP. Residues 137-218 enclose the VPS37 C-terminal domain; that stretch reads QEKLNELENQ…HLAAKTSSIG (82 aa).

Belongs to the VPS37 family. Component of the endosomal sorting required for transport complex I (ESCRT-I), composed of ELC, VPS28 and VPS37. Interacts with ELC.

The protein localises to the endosome. Component of the ESCRT-I complex (endosomal sorting complex required for transport I), a regulator of vesicular trafficking process. Required for the sorting of endocytic ubiquitinated cargos into multivesicular bodies (MVBs). In Arabidopsis thaliana (Mouse-ear cress), this protein is Vacuolar protein-sorting-associated protein 37 homolog 2 (VPS37-2).